The sequence spans 676 residues: DNA ligase (676 aa).

NAD(+) contacts are provided by residues 39–43, 88–91, and Glu118; these read DYVYD and SLND. Catalysis depends on Lys120, which acts as the N6-AMP-lysine intermediate. Arg141, Glu175, Lys291, and Lys315 together coordinate NAD(+). Zn(2+) is bound by residues Cys409, Cys412, Cys427, and Cys432. Positions 595-676 constitute a BRCT domain; that stretch reads EVESPFKDKT…MVDALDASHF (82 aa).

Belongs to the NAD-dependent DNA ligase family. LigA subfamily. The cofactor is Mg(2+). It depends on Mn(2+) as a cofactor.

It catalyses the reaction NAD(+) + (deoxyribonucleotide)n-3'-hydroxyl + 5'-phospho-(deoxyribonucleotide)m = (deoxyribonucleotide)n+m + AMP + beta-nicotinamide D-nucleotide.. Its function is as follows. DNA ligase that catalyzes the formation of phosphodiester linkages between 5'-phosphoryl and 3'-hydroxyl groups in double-stranded DNA using NAD as a coenzyme and as the energy source for the reaction. It is essential for DNA replication and repair of damaged DNA. This Enterococcus faecalis (strain ATCC 700802 / V583) protein is DNA ligase.